The following is a 601-amino-acid chain: Zinc finger protein 37 (601 aa).

Residues 1–70 (MATPEPAESD…VRANKNSSSS (70 aa)) form the KRAB domain. A Phosphothreonine modification is found at Thr3. Phosphoserine is present on Ser9. A compositionally biased stretch (polar residues) spans 30 to 43 (ETCSNPASMGNQDP). Residues 30-254 (ETCSNPASMG…SKSDKAPGSG (225 aa)) are disordered. A compositionally biased stretch (low complexity) spans 60–70 (SVRANKNSSSS). The span at 77–88 (TGTSAKVQQDGA) shows a compositional bias: polar residues. Composition is skewed to basic and acidic residues over residues 115 to 136 (KSSE…PSEK), 164 to 174 (KKPDTANEYRK), and 183 to 238 (VNRD…EKRK). The C2H2-type 1 zinc finger occupies 257 to 279 (YECNQCGKVLSHKQGLLDHQRTH). The segment at 285–303 (YECYECGIAFSQKSHLVVH) adopts a C2H2-type 2; atypical zinc-finger fold. C2H2-type zinc fingers lie at residues 314 to 337 (YECV…RISH), 343 to 365 (YKCN…IRSH), 371 to 393 (YECK…VRTH), 399 to 421 (YECN…MRIH), 427 to 449 (FECT…QRTH), 455 to 477 (YKCK…MRTH), 483 to 505 (FECN…QRVH), 511 to 533 (YECV…QRTH), 539 to 561 (FECY…QRSH), and 570 to 592 (YECV…MKTH).

The protein belongs to the krueppel C2H2-type zinc-finger protein family. In terms of tissue distribution, expressed in testes, brain, kidney, spleen, thymus, lung, and at low levels in liver.

The protein localises to the nucleus. May be involved in transcriptional regulation. This Rattus norvegicus (Rat) protein is Zinc finger protein 37 (Zfp37).